The sequence spans 174 residues: Large ribosomal subunit protein uL16 (174 aa).

The protein belongs to the universal ribosomal protein uL16 family.

The sequence is that of Large ribosomal subunit protein uL16 from Methanocaldococcus jannaschii (strain ATCC 43067 / DSM 2661 / JAL-1 / JCM 10045 / NBRC 100440) (Methanococcus jannaschii).